The following is a 380-amino-acid chain: Alanine racemase (380 aa).

The active-site Proton acceptor; specific for D-alanine is the Lys-39. Lys-39 is modified (N6-(pyridoxal phosphate)lysine). Arg-137 serves as a coordination point for substrate. Tyr-263 functions as the Proton acceptor; specific for L-alanine in the catalytic mechanism. A substrate-binding site is contributed by Met-310.

The protein belongs to the alanine racemase family. It depends on pyridoxal 5'-phosphate as a cofactor.

It catalyses the reaction L-alanine = D-alanine. The protein operates within amino-acid biosynthesis; D-alanine biosynthesis; D-alanine from L-alanine: step 1/1. In terms of biological role, catalyzes the interconversion of L-alanine and D-alanine. May also act on other amino acids. The sequence is that of Alanine racemase (alr) from Macrococcus caseolyticus (strain JCSC5402) (Macrococcoides caseolyticum).